Here is a 146-residue protein sequence, read N- to C-terminus: MKLSNLSPKAGSKKRRRRVGRGIAAGQGASCGFGMRGQKSRSGTGTKAGFEGGQMPLYRRVPKLKHFTIVNPKNFTIVNVGQLTDLPANTEVTLESLMAAGIVTTNDGPLKVLGDGELSVALKVTAAAFSNGAKAKIEAAGGSCEA.

Residues 1 to 52 (MKLSNLSPKAGSKKRRRRVGRGIAAGQGASCGFGMRGQKSRSGTGTKAGFEG) are disordered. Basic residues predominate over residues 11–20 (GSKKRRRRVG). The span at 23–35 (IAAGQGASCGFGM) shows a compositional bias: gly residues.

It belongs to the universal ribosomal protein uL15 family. As to quaternary structure, part of the 50S ribosomal subunit.

Its function is as follows. Binds to the 23S rRNA. This chain is Large ribosomal subunit protein uL15, found in Picosynechococcus sp. (strain ATCC 27264 / PCC 7002 / PR-6) (Agmenellum quadruplicatum).